We begin with the raw amino-acid sequence, 341 residues long: Ferredoxin--NADP reductase (341 aa).

The FAD site is built by D38, Q46, Y51, V91, F125, D292, and T333.

Belongs to the ferredoxin--NADP reductase type 2 family. In terms of assembly, homodimer. Requires FAD as cofactor.

It catalyses the reaction 2 reduced [2Fe-2S]-[ferredoxin] + NADP(+) + H(+) = 2 oxidized [2Fe-2S]-[ferredoxin] + NADPH. The chain is Ferredoxin--NADP reductase from Gluconacetobacter diazotrophicus (strain ATCC 49037 / DSM 5601 / CCUG 37298 / CIP 103539 / LMG 7603 / PAl5).